Here is a 1170-residue protein sequence, read N- to C-terminus: MASNGGGGLRHSNSSRLSRMSYSGEDGRSQAPGGGGDRPMVTFARRTHSGRYVSYSRDDLDSELGNSGDMSPESGQEFLNYHVTIPATPDNQPMDPAISARVEEQYVSNSLFTGGFNSVTRAHLMDKVIESEASHPQMAGAKGSSCAINGCDAKVMSDERGDDILPCECDFKICADCFADAVKNGGACPGCKDPYKATELDDVVGARPTLSLPPPPGGLPASRMERRLSIMRSQKAMTRSQTGDWDHNRWLFETKGTYGYGNAIWPKENEVDNGGGGGGGGGLGGGDGQPAEFTSKPWRPLTRKLKIPAGVLSPYRLLILIRMAVLGLFLAWRIKHKNEDAMWLWGMSVVCELWFGLSWLLDQLPKLCPVNRATDLAVLKDKFETPTPSNPNGRSDLPGLDIFVSTADPEKEPPLVTANTILSILAADYPVEKLSCYVSDDGGALLTFEAMAEAASFANMWVPFCRKHDIEPRNPESYFNLKRDPYKNKVRSDFVKDRRRVKREYDEFKVRINSLPDSIRRRSDAYHAREEIKAMKRQREAALDDVVEAVKIPKATWMADGTHWPGTWIQPSAEHARGDHAGIIQVMLKPPSDDPLYGTSSEEGRPLDFTEVDIRLPMLVYVSREKRPGYDHNKKAGAMNALVRSSAVMSNGPFILNLDCDHYVYNSQAFREGMCFMMDRGGDRIGYVQFPQRFEGIDPSDRYANHNTVFFDVNMRALDGIMGPVYVGTGCLFRRIALYGFDPPRSKEHSGCCSCCFPQRRKVKTSTVASEERQALRMADFDDEEMNMSQFPKKFGNSNFLINSIPIAEFQGRPLADHPGVKNGRPPGALTVPRDLLDASTVAEAISVISCWYEDKTEWGQRVGWIYGSVTEDVVTGYRMHNRGWKSVYCVTKRDAFRGTAPINLTDRLHQVLRWATGSVEIFFSRNNALLASRKMKFLQRIAYLNVGIYPFTSIFLIVYCFLPALSLFSGQFIVRTLNVTFLTYLLVITLTMCMLAVLEIKWSGISLEEWWRNEQFWLIGGTSAHLAAVLQGLLKVIAGIEISFTLTSKSGGDEADDEFADLYIVKWTSLMIPPIVIMMVNLIAIAVGFSRTIYSEIPQWSKLLGGVFFSFWVLAHLYPFAKGLMGRRGRTPTIVFVWSGLLAITISLLWVAINPPSQNSQIGGSFTFP.

2 disordered regions span residues 1-75 (MASN…PESG) and 269-295 (NEVD…EFTS). Positions 10-24 (RHSNSSRLSRMSYSG) are enriched in low complexity. The segment covering 273-288 (NGGGGGGGGGLGGGDG) has biased composition (gly residues). The next 2 membrane-spanning stretches (helical) occupy residues 311-331 (VLSP…LFLA) and 341-361 (AMWL…SWLL). The active site involves Asp-441. The stretch at 527 to 551 (HAREEIKAMKRQREAALDDVVEAVK) forms a coiled coil. Asp-873 is an active-site residue. 6 helical membrane-spanning segments follow: residues 955-975 (IFLI…QFIV), 981-1001 (TFLT…VLEI), 1027-1047 (LAAV…SFTL), 1070-1090 (SLMI…AVGF), 1104-1124 (LLGG…FAKG), and 1134-1154 (TIVF…WVAI).

The protein belongs to the glycosyltransferase 2 family. Plant cellulose synthase-like D subfamily.

The protein resides in the golgi apparatus membrane. Its function is as follows. Thought to be a Golgi-localized beta-glycan synthase that polymerize the backbones of noncellulosic polysaccharides (hemicelluloses) of plant cell wall. This Oryza sativa subsp. indica (Rice) protein is Cellulose synthase-like protein D2 (CSLD2).